A 792-amino-acid polypeptide reads, in one-letter code: Kinesin-related protein 2 (792 aa).

Disordered regions lie at residues 22–50 (TINSRPSLLRKPASSSSQSNDRISYPPST) and 162–183 (NNININSNNSSNSNNNILSPVQ). Residues 34–50 (ASSSSQSNDRISYPPST) are compositionally biased toward polar residues. The stretch at 284–423 (RLSLSIQDIK…LEKSRSDEKV (140 aa)) forms a coiled coil. The region spanning 437 to 781 (NIRVFCRIRP…LRFAAKVNSC (345 aa)) is the Kinesin motor domain. Residue 528–535 (GQTGSGKT) coordinates ATP.

The protein belongs to the TRAFAC class myosin-kinesin ATPase superfamily. Kinesin family. NCD subfamily.

Its subcellular location is the nucleus. It is found in the cytoplasm. The protein localises to the cytoskeleton. It localises to the spindle. Functionally, microtubule-dependent motor that is probably involved in microtubule organization in the mitotic spindle. The sequence is that of Kinesin-related protein 2 (kif2) from Dictyostelium discoideum (Social amoeba).